We begin with the raw amino-acid sequence, 208 residues long: MTDNARQIVLEHATEGAKLRERYFQQNADRVVELALQMALTLARGRKIMFCGNGGSAADAQHLAAEFVNRFMMERPPLPALALTTDSSILTAIGNDYGFEQVFQKQVQALGQPGDMLVGISTSGNSPNVVLALKAAREKGVTTVGMTGRGGGEMAALCDYLLDVSDRRTPLVQEIHITVGHLLCQLTDHFLFENVLALQPYLEGKAPE.

An SIS domain is found at 38 to 200; the sequence is MALTLARGRK…LFENVLALQP (163 aa). 53–55 is a substrate binding site; that stretch reads NGG. Residues H62 and E66 each contribute to the Zn(2+) site. Residues E66, 95 to 96, 121 to 123, S126, and Q173 each bind substrate; these read ND and STS. Residues Q173 and H181 each coordinate Zn(2+).

The protein belongs to the SIS family. GmhA subfamily. Homotetramer. Requires Zn(2+) as cofactor.

It localises to the cytoplasm. It catalyses the reaction 2 D-sedoheptulose 7-phosphate = D-glycero-alpha-D-manno-heptose 7-phosphate + D-glycero-beta-D-manno-heptose 7-phosphate. Its pathway is carbohydrate biosynthesis; D-glycero-D-manno-heptose 7-phosphate biosynthesis; D-glycero-alpha-D-manno-heptose 7-phosphate and D-glycero-beta-D-manno-heptose 7-phosphate from sedoheptulose 7-phosphate: step 1/1. Its function is as follows. Catalyzes the isomerization of sedoheptulose 7-phosphate in D-glycero-D-manno-heptose 7-phosphate. This is Phosphoheptose isomerase from Nitratidesulfovibrio vulgaris (strain DSM 19637 / Miyazaki F) (Desulfovibrio vulgaris).